A 154-amino-acid chain; its full sequence is Crossover junction endodeoxyribonuclease RuvC (154 aa).

Active-site residues include D7, E66, and D139. Mg(2+)-binding residues include D7, E66, and D139.

Belongs to the RuvC family. As to quaternary structure, homodimer which binds Holliday junction (HJ) DNA. The HJ becomes 2-fold symmetrical on binding to RuvC with unstacked arms; it has a different conformation from HJ DNA in complex with RuvA. In the full resolvosome a probable DNA-RuvA(4)-RuvB(12)-RuvC(2) complex forms which resolves the HJ. The cofactor is Mg(2+).

It is found in the cytoplasm. It catalyses the reaction Endonucleolytic cleavage at a junction such as a reciprocal single-stranded crossover between two homologous DNA duplexes (Holliday junction).. Functionally, the RuvA-RuvB-RuvC complex processes Holliday junction (HJ) DNA during genetic recombination and DNA repair. Endonuclease that resolves HJ intermediates. Cleaves cruciform DNA by making single-stranded nicks across the HJ at symmetrical positions within the homologous arms, yielding a 5'-phosphate and a 3'-hydroxyl group; requires a central core of homology in the junction. The consensus cleavage sequence is 5'-(A/T)TT(C/G)-3'. Cleavage occurs on the 3'-side of the TT dinucleotide at the point of strand exchange. HJ branch migration catalyzed by RuvA-RuvB allows RuvC to scan DNA until it finds its consensus sequence, where it cleaves and resolves the cruciform DNA. In Aliarcobacter butzleri (strain RM4018) (Arcobacter butzleri), this protein is Crossover junction endodeoxyribonuclease RuvC.